Consider the following 175-residue polypeptide: Apoptosis regulatory protein Siva (175 aa).

At Tyr34 the chain carries Phosphotyrosine; by ABL2. The tract at residues 36-55 (QEVFEKTKRLLFLGAQAYLD) is interaction with BCL2L1 isoform Bcl-x(L) and inhibition of BCL2L1 anti-apoptotic activity. Ser70 carries the post-translational modification Phosphoserine. The interaction with coxsackievirus B3 VP2 stretch occupies residues 105 to 123 (DPSGVASIACSSCVRAVDG).

As to quaternary structure, binds through its N-terminal region to the C-terminus of CD27 and to PXMP2/PMP22. Binds to the C-terminus of TNFRSF18/GITR. Isoform 1 binds to BCL2L1/BCLX isoform Bcl-x(L) but not to BAX. In terms of assembly, (Microbial infection) Interacts with coxsackievirus B3 capsid protein VP2; this interaction inhibits the binding of SIVA1 to CD27. Zn(2+) serves as cofactor. In terms of processing, phosphorylated by ABL2/ARG in response to oxidative stress. Ubiquitous. Mostly expressed in thymus, testis, ovary, prostate, small intestine and spleen and less in colon.

The protein localises to the cytoplasm. The protein resides in the nucleus. Functionally, induces CD27-mediated apoptosis. Inhibits BCL2L1 isoform Bcl-x(L) anti-apoptotic activity. Inhibits activation of NF-kappa-B and promotes T-cell receptor-mediated apoptosis. The polypeptide is Apoptosis regulatory protein Siva (SIVA1) (Homo sapiens (Human)).